A 404-amino-acid chain; its full sequence is Odorant receptor 67c (404 aa).

The Cytoplasmic portion of the chain corresponds to 1 to 45; the sequence is METAKDNTARTFMELMRVPVQFYRTIGEDIYAHRSTNPLKSLLFK. A helical transmembrane segment spans residues 46 to 66; sequence IYLYAGFINFNLLVIGELVFF. Over 67 to 79 the chain is Extracellular; sequence YNSIQDFETIRLA. A helical transmembrane segment spans residues 80–100; sequence IAVAPCIGFSLVADFKQAAMI. Topologically, residues 101–139 are cytoplasmic; that stretch reads RGKKTLIMLLDDLENMHPKTLAKQMEYKLPDFEKTMKRV. A helical membrane pass occupies residues 140-160; sequence INIFTFLCLAYTTTFSFYPAI. Residues 161–204 lie on the Extracellular side of the membrane; the sequence is KASVKFNFLGYDTFDRNFGFLIWFPFDATRNNLIYWIMYWDIAH. Residues 205-225 traverse the membrane as a helical segment; it reads GAYLAGIAFLCADLLLVVVIT. Residues 226-277 lie on the Cytoplasmic side of the membrane; sequence QICMHFNYISMRLEDHPCNSNEDKENIEFLIGIIRYHDKCLKLCEHVNDLYS. A helical membrane pass occupies residues 278–298; sequence FSLLLNFLMASMQICFIAFQV. Residues 299 to 304 are Extracellular-facing; it reads TESTVE. Residues 305–326 traverse the membrane as a helical segment; sequence VIIIYCIFLMTSMVQVFMVCYY. The Cytoplasmic portion of the chain corresponds to 327–373; that stretch reads GDTLIAASLKVGDAAYNQKWFQCSKSYCTMLKLLIMRSQKPASIRPP. A helical transmembrane segment spans residues 374–394; it reads TFPPISLVTYMKVISMSYQFF. Topologically, residues 395–404 are extracellular; the sequence is ALLRTTYSNN.

This sequence belongs to the insect chemoreceptor superfamily. Heteromeric odorant receptor channel (TC 1.A.69) family. Or49a subfamily. Interacts with Orco. Complexes exist early in the endomembrane system in olfactory sensory neurons (OSNs), coupling these complexes to the conserved ciliary trafficking pathway. Expressed in olfactory sensory neurons in the antenna.

It localises to the cell membrane. In terms of biological role, odorant receptor which mediates acceptance or avoidance behavior, depending on its substrates. The odorant receptor repertoire encodes a large collection of odor stimuli that vary widely in identity, intensity, and duration. May form a complex with Orco to form odorant-sensing units, providing sensitive and prolonged odorant signaling and calcium permeability. The sequence is that of Odorant receptor 67c (Or67c) from Drosophila melanogaster (Fruit fly).